A 188-amino-acid chain; its full sequence is uncharacterized protein (188 aa).

Belongs to the isochorismatase family.

This is an uncharacterized protein from Escherichia coli O157:H7.